A 384-amino-acid chain; its full sequence is Iron(3+)-hydroxamate import system permease protein FhuB (384 aa).

Transmembrane regions (helical) follow at residues 58–78, 115–135, 154–174, 176–196, 202–222, 243–263, 296–316, 330–350, and 357–377; these read GAVIVLIAGLCLLCLGAFLSI, TAAAALVGALLAVSGAIMQGM, FAVSIAFAFFPGLSAMGLVLW, FAGAGLGASTVMGIGMFSRGG, LALAGTAVTYFFTGISTAIAI, WSGVQLLLIAGAVGLTLAFFI, VILTGAAVSIAGTIAFIGLII, WIIPCSAVLGAVLLVFADIAA, and FETPVGALTSLIGVPFFFYLA.

This sequence belongs to the binding-protein-dependent transport system permease family. FecCD subfamily. The complex is composed of an ATP-binding protein (FhuC), two transmembrane proteins (FhuB and FhuG) and a solute-binding protein (FhuD or YxeB).

The protein localises to the cell membrane. Its subcellular location is the membrane raft. Functionally, part of the ABC transporter complex FhuBGCD involved in iron(3+)-hydroxamate import. Responsible for the translocation of the substrate across the membrane. This chain is Iron(3+)-hydroxamate import system permease protein FhuB (fhuB), found in Bacillus subtilis (strain 168).